Here is a 293-residue protein sequence, read N- to C-terminus: Glutamyl-Q tRNA(Asp) synthetase (293 aa).

L-glutamate is bound by residues R4 to S8 and E40. The 'HIGH' region signature appears at P7–N17. Zn(2+) is bound by residues C92, C94, Y113, and C117. Residues Y180 and R198 each contribute to the L-glutamate site. Residues R236–R240 carry the 'KMSKS' region motif. K239 is an ATP binding site.

The protein belongs to the class-I aminoacyl-tRNA synthetase family. GluQ subfamily. Zn(2+) is required as a cofactor.

Functionally, catalyzes the tRNA-independent activation of glutamate in presence of ATP and the subsequent transfer of glutamate onto a tRNA(Asp). Glutamate is transferred on the 2-amino-5-(4,5-dihydroxy-2-cyclopenten-1-yl) moiety of the queuosine in the wobble position of the QUC anticodon. In Corynebacterium glutamicum (strain ATCC 13032 / DSM 20300 / JCM 1318 / BCRC 11384 / CCUG 27702 / LMG 3730 / NBRC 12168 / NCIMB 10025 / NRRL B-2784 / 534), this protein is Glutamyl-Q tRNA(Asp) synthetase.